Consider the following 255-residue polypeptide: Thiazole synthase (255 aa).

K96 acts as the Schiff-base intermediate with DXP in catalysis. Residues G157, 183-184 (AG), and 205-206 (NS) contribute to the 1-deoxy-D-xylulose 5-phosphate site.

Belongs to the ThiG family. Homotetramer. Forms heterodimers with either ThiH or ThiS.

The protein localises to the cytoplasm. It carries out the reaction [ThiS sulfur-carrier protein]-C-terminal-Gly-aminoethanethioate + 2-iminoacetate + 1-deoxy-D-xylulose 5-phosphate = [ThiS sulfur-carrier protein]-C-terminal Gly-Gly + 2-[(2R,5Z)-2-carboxy-4-methylthiazol-5(2H)-ylidene]ethyl phosphate + 2 H2O + H(+). The protein operates within cofactor biosynthesis; thiamine diphosphate biosynthesis. Its function is as follows. Catalyzes the rearrangement of 1-deoxy-D-xylulose 5-phosphate (DXP) to produce the thiazole phosphate moiety of thiamine. Sulfur is provided by the thiocarboxylate moiety of the carrier protein ThiS. In vitro, sulfur can be provided by H(2)S. The protein is Thiazole synthase of Staphylococcus carnosus (strain TM300).